A 2098-amino-acid polypeptide reads, in one-letter code: 1-phosphatidylinositol 3-phosphate 5-kinase (2098 aa).

The segment at 1-45 is disordered; the sequence is MATDDKTSPTLDSANDLPRSPTSPSHLTHFKPLTPDQDEPPFKSA. The residue at position 2 (Ala2) is an N-acetylalanine. 2 positions are modified to phosphoserine; by autocatalysis: Ser23 and Ser48. The interval 57–123 is disordered; that stretch reads KERAEGGQGE…EPTFGGHDPR (67 aa). Residues 66–88 show a composition bias toward polar residues; it reads EQQPLSGSWTSPQLPSRTQSVRS. Ser88 bears the Phosphoserine mark. Residues 158–218 form an FYVE-type zinc finger; sequence DSQCKECYDC…ACTYCRKIAL (61 aa). Zn(2+) is bound by residues Cys164, Cys167, Cys180, Cys183, Cys188, Cys191, Cys210, and Cys213. Positions 292 to 329 are disordered; sequence VQEDAGKSPARNRSASITNLSLDRSGSPMVPSYETSVS. Residues Ser299, Ser307, and Ser312 each carry the phosphoserine modification. Over residues 302–315 the composition is skewed to polar residues; that stretch reads RNRSASITNLSLDR. A Phosphoserine; by PKB/AKT1 or PKB/AKT2 modification is found at Ser318. The residue at position 329 (Ser329) is a Phosphoserine. In terms of domain architecture, DEP spans 365–440; it reads HSSGMEFQDH…DEYALYRPLQ (76 aa). The span at 442-459 shows a compositional bias: polar residues; that stretch reads TEFSETPSPDSDSVNSVE. A disordered region spans residues 442 to 469; it reads TEFSETPSPDSDSVNSVEGHSEPSWFKD. A compositionally biased stretch (basic and acidic residues) spans 460 to 469; the sequence is GHSEPSWFKD. At Ser475 the chain carries Phosphoserine. Residues 484-505 form a disordered region; that stretch reads GDDNLANSASPSKRTSVSSFQS. The segment covering 488–505 has biased composition (polar residues); sequence LANSASPSKRTSVSSFQS. Residues 616–868 are chaperonin-like domain; the sequence is MMALLQQLLH…MICVAYHSQL (253 aa). Disordered regions lie at residues 1161–1191 and 1512–1616; these read RIQP…NEGD and FQQE…STDS. Low complexity predominate over residues 1177–1186; it reads SSTSSGQSGS. Residue Ser1522 is modified to Phosphoserine; by autocatalysis. A phosphoserine mark is found at Ser1544 and Ser1549. The segment covering 1562–1578 has biased composition (low complexity); it reads LTTLSSQSSTSSTHLQL. Ser1669 bears the Phosphoserine; by autocatalysis mark. The disordered stretch occupies residues 1692-1799; it reads QWNSAEEGLP…PQDEVDGGDT (108 aa). Residues 1704-1714 are compositionally biased toward low complexity; it reads STSDSRPKSSS. The segment covering 1723-1735 has biased composition (polar residues); it reads GGQTNRTTETEPQ. Ser1754 carries the post-translational modification Phosphoserine. The PIPK domain occupies 1758–2084; sequence SSQKRETLRG…RFCEAMDKYF (327 aa). Residues 1842–2098 form a catalytic region; sequence EEDFIRSLSH…DHWTGLGLNC (257 aa). Ser1969 and Ser2053 each carry phosphoserine; by autocatalysis.

In terms of assembly, component of the PI(3,5)P2 regulatory complex/PAS complex, at least composed of PIKFYVE, FIG4 and VAC14. VAC14 nucleates the assembly of the complex and serves as a scaffold by pentamerizing into a star-shaped structure, which can bind a single copy each of PIKFYVE and FIG4 and coordinates their activities. Interacts (via chaperonin-like domain) with RABEPK; the interaction recruits RABEPK to the endosomal membrane. Interacts with SPAG9. Interacts with EGFR. Post-translationally, autophosphorylates which inhibits its own phosphatidylinositol 3-phosphate 5-kinase activity, stimulates FIG4 lipid phosphatase activity and down-regulates lipid product formation. Dephosphorylated by FIG4 in the PI(3,5)P2 regulatory complex, at Ser-48, Ser-1669 and Ser-2053. Phosphorylated in response to insulin at Ser-318 in a protein kinase B (PKB)-dependent manner.

It is found in the endosome membrane. It localises to the early endosome membrane. Its subcellular location is the cytoplasmic vesicle. The protein resides in the phagosome membrane. The protein localises to the late endosome membrane. The catalysed reaction is a 1,2-diacyl-sn-glycero-3-phospho-(1D-myo-inositol-3-phosphate) + ATP = a 1,2-diacyl-sn-glycero-3-phospho-(1D-myo-inositol-3,5-bisphosphate) + ADP + H(+). It carries out the reaction a 1,2-diacyl-sn-glycero-3-phospho-(1D-myo-inositol) + ATP = a 1,2-diacyl-sn-glycero-3-phospho-(1D-myo-inositol-5-phosphate) + ADP + H(+). The enzyme catalyses L-seryl-[protein] + ATP = O-phospho-L-seryl-[protein] + ADP + H(+). Its activity is regulated as follows. Inhibited by apilimod and YM201636. Functionally, dual specificity kinase implicated in myriad essential cellular processes such as maintenance of endomembrane homeostasis, and endocytic-vacuolar pathway, lysosomal trafficking, nuclear transport, stress- or hormone-induced signaling and cell cycle progression. The PI(3,5)P2 regulatory complex regulates both the synthesis and turnover of phosphatidylinositol 3,5-bisphosphate (PtdIns(3,5)P2). Sole enzyme to catalyze the phosphorylation of phosphatidylinositol 3-phosphate on the fifth hydroxyl of the myo-inositol ring, to form (PtdIns(3,5)P2). Also catalyzes the phosphorylation of phosphatidylinositol on the fifth hydroxyl of the myo-inositol ring, to form phosphatidylinositol 5-phosphate (PtdIns(5)P). Has serine-protein kinase activity and is able to autophosphorylate and transphosphorylate. Autophosphorylation inhibits its own phosphatidylinositol 3-phosphate 5-kinase activity, stimulates FIG4 lipid phosphatase activity and down-regulates lipid product formation. Involved in key endosome operations such as fission and fusion in the course of endosomal cargo transport. Required for the maturation of early into late endosomes, phagosomes and lysosomes. Regulates vacuole maturation and nutrient recovery following engulfment of macromolecules, initiates the redistribution of accumulated lysosomal contents back into the endosome network. Critical regulator of the morphology, degradative activity, and protein turnover of the endolysosomal system in macrophages and platelets. In neutrophils, critical to perform chemotaxis, generate ROS, and undertake phagosome fusion with lysosomes. Plays a key role in the processing and presentation of antigens by major histocompatibility complex class II (MHC class II) mediated by CTSS. Regulates melanosome biogenesis by controlling the delivery of proteins from the endosomal compartment to the melanosome. Essential for systemic glucose homeostasis, mediates insulin-induced signals for endosome/actin remodeling in the course of GLUT4 translocation/glucose uptake activation. Supports microtubule-based endosome-to-trans-Golgi network cargo transport, through association with SPAG9 and RABEPK. Mediates EGFR trafficking to the nucleus. (Microbial infection) Required for cell entry of coronaviruses SARS-CoV and SARS-CoV-2, as well as human coronavirus EMC (HCoV-EMC) by endocytosis. This is 1-phosphatidylinositol 3-phosphate 5-kinase from Homo sapiens (Human).